We begin with the raw amino-acid sequence, 54 residues long: Large ribosomal subunit protein bL33 (54 aa).

This sequence belongs to the bacterial ribosomal protein bL33 family.

The chain is Large ribosomal subunit protein bL33 from Symbiobacterium thermophilum (strain DSM 24528 / JCM 14929 / IAM 14863 / T).